Here is a 299-residue protein sequence, read N- to C-terminus: Myozenin-1 (299 aa).

The segment at 1-34 (MPLSGTPAPNKKRKSSKLIMELTGGGQESSGLNL) is disordered. At S82 the chain carries Phosphoserine. Residues 102–174 (GQGFSYSKSN…TGSGDQAGGE (73 aa)) form a disordered region. 2 stretches are compositionally biased toward gly residues: residues 112–125 (GRGG…GSAG) and 137–173 (SGSG…QAGG).

This sequence belongs to the myozenin family. Interacts with ACTN2, ACTN3, FLNA, FLNB, FLNC, LDB3, PPP3CA and TCAP. Interacts via its C-terminal region with MYOT. In terms of tissue distribution, expressed primarily in skeletal muscle. Detected at lower levels in heart, prostate and pancreas.

The protein localises to the nucleus. The protein resides in the cell projection. It is found in the pseudopodium. Functionally, myozenins may serve as intracellular binding proteins involved in linking Z-disk proteins such as alpha-actinin, gamma-filamin, TCAP/telethonin, LDB3/ZASP and localizing calcineurin signaling to the sarcomere. Plays an important role in the modulation of calcineurin signaling. May play a role in myofibrillogenesis. This chain is Myozenin-1, found in Homo sapiens (Human).